We begin with the raw amino-acid sequence, 524 residues long: MKVARVSEIKLLDREAAEKYGVKEEILMENAGASVARLAVSLIGLPMSAAVVCGPGNNGGDGLVAARHLSSMGADVKVFLVAAPDKLAGIVKENYERVVKAGIAVEVVDEERAEGLSEELSLFDVVVDALFGTGLSRPLEGVYRKVVEAINGSGSLVISVDIPSGVHGDTGQVLGVAVRADYTVTFGLPKLGNLMYPGAELGGELYVHHISYPRALLEDSRLKVETNDPVPLPPRRPDTHKGDYGKALFVAGSRRYMGAPLLCSKSFLKAGGGYSRLATIKSIVPFLGVRAPEVVYEALEETASGTVAYGNLERILELSKSSDIVAVGPGLGLEEETLRLVCDLARSVEKPLIVDGDGLTAVARCGEYISERRAPTVLTPHAGEMSRLTGKSVEEVRASRVDAALELAGKLKAYVVLKGAHTVIATPDGRAYINLSGNPGMATAGSGDVLVGAIAALYGLGLGFEEAVRMGVFVHGLAGDIAAEERGQDGLTSVTLMNYLPKALRALREDFESVLERYTIKVLP.

Positions 1 to 219 (MKVARVSEIK…ISYPRALLED (219 aa)) are NAD(P)H-hydrate epimerase. The region spanning 9-218 (IKLLDREAAE…HISYPRALLE (210 aa)) is the YjeF N-terminal domain. The interval 57–61 (NNGGD) is NADPHX 1; for epimerase activity. 2 residues coordinate K(+): Asn-58 and Asp-128. Positions 132–138 (GTGLSRP) are NADPHX 1; for epimerase activity. 2 residues coordinate (6S)-NADPHX: Tyr-143 and Asp-161. Ser-164 contributes to the K(+) binding site. The YjeF C-terminal domain maps to 224–507 (VETNDPVPLP…NYLPKALRAL (284 aa)). An ADP-dependent (S)-NAD(P)H-hydrate dehydratase region spans residues 224–524 (VETNDPVPLP…LERYTIKVLP (301 aa)). Residue Gly-330 coordinates (6S)-NADPHX. Residues 381–387 (HAGEMSR) form an NADPHX 2; for dehydratase activity region. ADP contacts are provided by residues 418-422 (KGAHT) and 438-447 (NPGMATAGSG). Asp-448 serves as a coordination point for (6S)-NADPHX.

It in the N-terminal section; belongs to the NnrE/AIBP family. This sequence in the C-terminal section; belongs to the NnrD/CARKD family. It depends on K(+) as a cofactor.

It carries out the reaction (6S)-NADHX + ADP = AMP + phosphate + NADH + H(+). The catalysed reaction is (6S)-NADPHX + ADP = AMP + phosphate + NADPH + H(+). It catalyses the reaction (6R)-NADHX = (6S)-NADHX. The enzyme catalyses (6R)-NADPHX = (6S)-NADPHX. Its function is as follows. Bifunctional enzyme that catalyzes the epimerization of the S- and R-forms of NAD(P)HX and the dehydration of the S-form of NAD(P)HX at the expense of ADP, which is converted to AMP. This allows the repair of both epimers of NAD(P)HX, a damaged form of NAD(P)H that is a result of enzymatic or heat-dependent hydration. In Thermofilum pendens (strain DSM 2475 / Hrk 5), this protein is Bifunctional NAD(P)H-hydrate repair enzyme Nnr (nnr).